We begin with the raw amino-acid sequence, 237 residues long: Ribosomal RNA small subunit methyltransferase G (237 aa).

Residues glycine 78, phenylalanine 83, 129 to 130, and arginine 146 each bind S-adenosyl-L-methionine; that span reads AE.

This sequence belongs to the methyltransferase superfamily. RNA methyltransferase RsmG family.

It is found in the cytoplasm. Functionally, specifically methylates the N7 position of a guanine in 16S rRNA. The protein is Ribosomal RNA small subunit methyltransferase G of Mesoplasma florum (strain ATCC 33453 / NBRC 100688 / NCTC 11704 / L1) (Acholeplasma florum).